We begin with the raw amino-acid sequence, 641 residues long: MDGSGPFSCPICLEPLREPVTLPCGHNFCLACLGALWPHRSAGGTGGSGGPARCPLCQEPFPDGLQLRKNHTLSELLQLRQGSVPGPMSAPASGSTRGATPEPSAPSAPPPAPEPSAPCAPEQWPAGEEPVRCDACPEGAALPAALSCLSCLASFCSAHLAPHERSPALRGHRLVPPLRRLEESLCPRHLRPLERYCRVERVCLCEACATQDHRGHELVPLEQERALQEVEQSKVLSAAEDRMDELGAGIAQSRRTVALIKSAAVAERERVSQMFAEATATLQSFQNEVMGFIEEGEATMLGRSQGDLRRQEEQRSRLSKARHNLGQVPEADSVSFLQELLALRLALEEGCGPGPGPPRELSFTKSSQVVKAVRDTLISACASQWEQLRGLGSNEDGLQKLGSEDVESQDPDSTSLLESEAPRDYFLKFAYIVDLDSDTADKFLQLFGTKGVKRVLCPINYPESPTRFTHCEQVLGEGALDRGTYYWEVEIIEGWVSVGVMAEGFSPQEPYDRGRLGRNAHSCCLQWNGRGFSVWFCGLEAPLPHAFSPTVGVCLEYADHALAFYAVRDGKLSLLRRLKASRPRRSGALASPTDPFQSRLDSHFSGLFNHRLKPAFFLESVDAHLQIGPLKKSCITVLKRR.

The RING-type zinc-finger motif lies at cysteine 9–glutamine 58. Position 72 is a phosphothreonine (threonine 72). Residues glutamine 81–glutamine 123 are disordered. The segment covering proline 103–proline 118 has biased composition (pro residues). The B box-type zinc finger occupies leucine 181–leucine 221. Positions 186, 189, 208, and 213 each coordinate Zn(2+). Residues glutamine 305 to leucine 325 are a coiled coil. Position 393 is a phosphoserine (serine 393). Residues aspartate 396–leucine 416 are disordered. One can recognise a B30.2/SPRY domain in the interval serine 413 to cysteine 634. Residue serine 464 is modified to Phosphoserine. Arginine 585 is modified (omega-N-methylarginine). Serine 591 carries the post-translational modification Phosphoserine.

It belongs to the TRIM/RBCC family. In terms of tissue distribution, expressed in hepatocytes, expression is increased in fatty livers.

It is found in the cytoplasm. It localises to the nucleus. It carries out the reaction S-ubiquitinyl-[E2 ubiquitin-conjugating enzyme]-L-cysteine + [acceptor protein]-L-lysine = [E2 ubiquitin-conjugating enzyme]-L-cysteine + N(6)-ubiquitinyl-[acceptor protein]-L-lysine.. Its pathway is protein modification; protein ubiquitination. Functionally, E3 ubiquitin-protein ligase that mediates the ubiquitination and proteasomal degradation of CYLD. This is E3 ubiquitin-protein ligase TRIM47 from Mus musculus (Mouse).